We begin with the raw amino-acid sequence, 105 residues long: Thioredoxin (105 aa).

Residues 2 to 105 form the Thioredoxin domain; that stretch reads VKQIESKYAF…KLEATINELI (104 aa). Lys3 carries the post-translational modification N6-acetyllysine. Residue Lys8 is modified to N6-succinyllysine. Residues Cys32 and Cys35 each act as nucleophile in the active site. A disulfide bridge links Cys32 with Cys35. The residue at position 39 (Lys39) is an N6-acetyllysine. An S-nitrosocysteine mark is found at Cys62 and Cys69. At Cys73 the chain carries S-nitrosocysteine; alternate. An N6-acetyllysine; alternate modification is found at Lys94. The residue at position 94 (Lys94) is an N6-succinyllysine; alternate.

Belongs to the thioredoxin family. In terms of assembly, homodimer; disulfide-linked. Interacts with TXNIP through the redox-active site. Interacts with MAP3K5 and CASP3. Interacts with APEX1; the interaction stimulates the FOS/JUN AP-1 DNA-binding activity in a redox-dependent manner. Post-translationally, in the fully reduced protein, both Cys-69 and Cys-73 are nitrosylated in response to nitric oxide (NO). When two disulfide bonds are present in the protein, only Cys-73 is nitrosylated. Cys-73 can serve as donor for nitrosylation of target proteins.

It is found in the nucleus. The protein resides in the cytoplasm. It localises to the secreted. In terms of biological role, participates in various redox reactions through the reversible oxidation of its active center dithiol to a disulfide and catalyzes dithiol-disulfide exchange reactions. Plays a role in the reversible S-nitrosylation of cysteine residues in target proteins, and thereby contributes to the response to intracellular nitric oxide. Nitrosylates the active site Cys of CASP3 in response to nitric oxide (NO), and thereby inhibits caspase-3 activity. Induces the FOS/JUN AP-1 DNA binding activity in ionizing radiation (IR) cells through its oxidation/reduction status and stimulates AP-1 transcriptional activity. The polypeptide is Thioredoxin (TXN) (Bos taurus (Bovine)).